The chain runs to 174 residues: NADH-ubiquinone oxidoreductase chain 6 (174 aa).

5 helical membrane passes run 1–21, 24–44, 47–67, 86–106, and 151–171; these read MTYV…GFSS, SPIY…MIIL, GGAY…MVVF, FEVL…VLWV, and WLVV…IEIT.

It belongs to the complex I subunit 6 family. In terms of assembly, core subunit of respiratory chain NADH dehydrogenase (Complex I) which is composed of 45 different subunits.

It is found in the mitochondrion inner membrane. It carries out the reaction a ubiquinone + NADH + 5 H(+)(in) = a ubiquinol + NAD(+) + 4 H(+)(out). Core subunit of the mitochondrial membrane respiratory chain NADH dehydrogenase (Complex I) which catalyzes electron transfer from NADH through the respiratory chain, using ubiquinone as an electron acceptor. Essential for the catalytic activity and assembly of complex I. The sequence is that of NADH-ubiquinone oxidoreductase chain 6 (MT-ND6) from Papio hamadryas (Hamadryas baboon).